Consider the following 457-residue polypeptide: Phosphomethylpyrimidine synthase (457 aa).

Substrate is bound by residues Asn-88, Met-117, Tyr-146, His-182, Ser-204–Gly-206, Asp-245–Arg-248, and Glu-284. His-288 is a binding site for Zn(2+). Tyr-311 serves as a coordination point for substrate. A Zn(2+)-binding site is contributed by His-352. The [4Fe-4S] cluster site is built by Cys-428, Cys-431, and Cys-435.

This sequence belongs to the ThiC family. It depends on [4Fe-4S] cluster as a cofactor.

The catalysed reaction is 5-amino-1-(5-phospho-beta-D-ribosyl)imidazole + S-adenosyl-L-methionine = 4-amino-2-methyl-5-(phosphooxymethyl)pyrimidine + CO + 5'-deoxyadenosine + formate + L-methionine + 3 H(+). The protein operates within cofactor biosynthesis; thiamine diphosphate biosynthesis. Its function is as follows. Catalyzes the synthesis of the hydroxymethylpyrimidine phosphate (HMP-P) moiety of thiamine from aminoimidazole ribotide (AIR) in a radical S-adenosyl-L-methionine (SAM)-dependent reaction. The chain is Phosphomethylpyrimidine synthase from Clostridium tetani (strain Massachusetts / E88).